A 59-amino-acid polypeptide reads, in one-letter code: Ribosome biogenesis protein Nop10 (59 aa).

The protein belongs to the NOP10 family.

Its function is as follows. Involved in ribosome biogenesis; more specifically in 18S rRNA pseudouridylation and in cleavage of pre-rRNA. The polypeptide is Ribosome biogenesis protein Nop10 (Thermococcus sibiricus (strain DSM 12597 / MM 739)).